The primary structure comprises 185 residues: Elongation factor P 1 (185 aa).

The protein belongs to the elongation factor P family.

The protein resides in the cytoplasm. It participates in protein biosynthesis; polypeptide chain elongation. In terms of biological role, involved in peptide bond synthesis. Stimulates efficient translation and peptide-bond synthesis on native or reconstituted 70S ribosomes in vitro. Probably functions indirectly by altering the affinity of the ribosome for aminoacyl-tRNA, thus increasing their reactivity as acceptors for peptidyl transferase. In Chlamydia trachomatis serovar D (strain ATCC VR-885 / DSM 19411 / UW-3/Cx), this protein is Elongation factor P 1 (efp1).